Reading from the N-terminus, the 218-residue chain is DNA ADP-ribosyl transferase (218 aa).

The 204-residue stretch at 14–217 (ALIWRIVHRD…SVHTRSGWYF (204 aa)) folds into the DarT domain. Residues 18-20 (RIV) and Arg-57 contribute to the NAD(+) site. Positions 41–59 (QAENWINIGNPELIGKRAG) are NAD(+)-binding element. Catalysis depends on Arg-57, which acts as the Proton acceptor. Positions 123 to 170 (TDSHAYYNWTNYYTSLNSLDQIDWPILQARDFRRDPDDPAKFERYQAE) are ADP-ribosylating turn-turn loop. Glu-170 is an active-site residue.

This sequence belongs to the DarT ADP-ribosyltransferase family. As to quaternary structure, interacts with cognate antitoxin DarG (via C-terminus); this heterodimeric complex neutralizes the toxic effect of DarT by preventing ssDNA binding to DarT and consequently inactivating the toxin by direct protein-protein interactions.

The enzyme catalyses a thymidine in DNA + NAD(+) = an N-(ADP-alpha-D-ribosyl)-thymidine in DNA + nicotinamide + H(+). Functionally, toxic component of the hybrid type II/IV toxin-antitoxin (TA) system DarTG, which plays a crucial role in controlling bacterial growth and bacteriophage infection. ADP-ribosylates ssDNA in the sequence TTT/TCT. In case of phage infection, DarT toxin ADP-ribosylates DNA, which inhibits both viral DNA and RNA synthesis and leads to abortive infection. Its toxic effect is neutralized by cognate antitoxin DarG. May target ssDNA loops during DNA replication, probably modifies thymidine. Wild-type protein cannot be expressed at low levels in the absence of its cognate antitoxin, but a mutant protein (G49D) can be expressed, which slows growth, rapidly inhibits DNA replication, and induces RecA expression and the SOS response. The slow growth phenotype can be suppressed by cognate antitoxin DarG. Has no activity on dsDNA in vitro. In vivo ADP-ribosylates genomic DNA (gDNA). Genetic data strongly suggests ADP-ribosylation by DarT probably generates ssDNA gaps that are repaired by the RecFOR-mediated homologous recombination pathway (RuvAB, RecG) and resolved by RuvC. In some cases these gaps probably migrate into dsDNA, where they are resolved by nucleotide excision repair (NER) detected by UvrAB, excised by UvrC, removed by UvrD, and repaired by Pol I and ligase. Other pathways may also be involved in ADP-ribosylation removal from DNA. In Escherichia coli O127:H6 (strain E2348/69 / EPEC), this protein is DNA ADP-ribosyl transferase.